Here is a 239-residue protein sequence, read N- to C-terminus: Protein GrpE (239 aa).

2 disordered regions span residues 1-56 (MIEN…KNTI) and 208-239 (SMGPGKQNSQQEVEKDTVEEDVNSEVNTSEDV). The segment covering 40-53 (TSQKKEAINTEELK) has biased composition (basic and acidic residues). The span at 224–239 (TVEEDVNSEVNTSEDV) shows a compositional bias: acidic residues.

The protein belongs to the GrpE family. In terms of assembly, homodimer.

The protein resides in the cytoplasm. Its function is as follows. Participates actively in the response to hyperosmotic and heat shock by preventing the aggregation of stress-denatured proteins, in association with DnaK and GrpE. It is the nucleotide exchange factor for DnaK and may function as a thermosensor. Unfolded proteins bind initially to DnaJ; upon interaction with the DnaJ-bound protein, DnaK hydrolyzes its bound ATP, resulting in the formation of a stable complex. GrpE releases ADP from DnaK; ATP binding to DnaK triggers the release of the substrate protein, thus completing the reaction cycle. Several rounds of ATP-dependent interactions between DnaJ, DnaK and GrpE are required for fully efficient folding. The chain is Protein GrpE from Prochlorococcus marinus (strain MIT 9215).